A 523-amino-acid polypeptide reads, in one-letter code: Cytochrome P450 monooxygenase ple1 (523 aa).

A helical transmembrane segment spans residues A9–K29. Residue N141 is glycosylated (N-linked (GlcNAc...) asparagine). C444 is a binding site for heme.

This sequence belongs to the cytochrome P450 family. Heme serves as cofactor.

The protein localises to the membrane. It participates in secondary metabolite biosynthesis; terpenoid biosynthesis. Its function is as follows. Cytochrome P450 monooxygenase; part of the gene cluster that mediates the biosynthesis of pleuromutilin, a tricyclic diterpene showing antibacterial properties. The geranylgeranyl diphosphate (GGPP) synthase ple4 catalyzes the first step in pleuromutilin biosynthesis. GGPP is then substrate of the premutilin synthase (PS) ple3 to yield premutilin. Premutilin synthase is a bifunctional enzyme composed of the fusion of a class II diterpene cyclase (DTC) and a class I diterpene synthase (DTS), with the corresponding domains and active sites containing characteristic aspartate-rich motifs. GGPP is first converted to mutildienyl-diphosphate (MPP) at the class II DTC site. MPP is subsequently further cyclized at the class I DTS site, followed by a 1,5-hydride shift and addition of water prior to terminating deprotonation, to yield premutilin. The cytochrome P450 monooxygenases ple5 and ple6 hydroxylate premutilin at C-11 and C-3, respectively, producing 11-hydroxypremutilin and 3-hydroxypremutilin. The combination of the actions of both ple5 and ple6 leads to the production of 3,11-dihydroxypremutilin. The short chain dehydrogenase ple7 further converts 3,11-dihydroxypremutilin into mutilin. The acetyltransferase ple2 then acetylates mutilin to produce 14-O-acetylmutilin. Finally, the cytochrome P450 monooxygenase ple1 catalyzes hydroxylation on the alpha position of the acetyl side chain of 14-O-acetylmutilin to yield pleuromutilin. In Rhodocybe pseudopiperita (Clitopilus pseudopiperitus), this protein is Cytochrome P450 monooxygenase ple1.